An 870-amino-acid chain; its full sequence is Rho GTPase-activating protein 7 (870 aa).

The region spanning 18–125 (TVFKSGPLFI…WKTALEQALA (108 aa)) is the PH domain. Residues 167–367 (LALEDIDGSP…VLLEDYGSIF (201 aa)) form the Rho-GAP domain. Disordered stretches follow at residues 378 to 432 (STES…SGCT) and 446 to 465 (DSDIESPRDTNGPRCNSNIR). Residues 407–417 (NEVEPVTDDDN) are compositionally biased toward acidic residues. Residues 569–693 (GEDELAIQRL…HQLNQQRQTH (125 aa)) adopt a coiled-coil conformation. A disordered region spans residues 736-793 (HEENVLGAEWRNSKGAGSFGVGNSRQPSRKQIPESTNTTDSKISEESGKISVDKLSSI). The segment covering 777–787 (KISEESGKISV) has biased composition (basic and acidic residues).

Its function is as follows. Acts as a GTPase activator for the Rac-type GTPase by converting it to an inactive GDP-bound state. The chain is Rho GTPase-activating protein 7 (ROPGAP7) from Arabidopsis thaliana (Mouse-ear cress).